Consider the following 564-residue polypeptide: Dihydroxy-acid dehydratase (564 aa).

A [2Fe-2S] cluster-binding site is contributed by cysteine 53. Mg(2+) is bound at residue aspartate 85. Residue cysteine 126 participates in [2Fe-2S] cluster binding. Mg(2+) contacts are provided by aspartate 127 and lysine 128. Lysine 128 is modified (N6-carboxylysine). Cysteine 203 lines the [2Fe-2S] cluster pocket. Glutamate 454 lines the Mg(2+) pocket. Serine 480 serves as the catalytic Proton acceptor.

The protein belongs to the IlvD/Edd family. In terms of assembly, homodimer. The cofactor is [2Fe-2S] cluster. Mg(2+) is required as a cofactor.

The enzyme catalyses (2R)-2,3-dihydroxy-3-methylbutanoate = 3-methyl-2-oxobutanoate + H2O. It catalyses the reaction (2R,3R)-2,3-dihydroxy-3-methylpentanoate = (S)-3-methyl-2-oxopentanoate + H2O. It functions in the pathway amino-acid biosynthesis; L-isoleucine biosynthesis; L-isoleucine from 2-oxobutanoate: step 3/4. It participates in amino-acid biosynthesis; L-valine biosynthesis; L-valine from pyruvate: step 3/4. Functions in the biosynthesis of branched-chain amino acids. Catalyzes the dehydration of (2R,3R)-2,3-dihydroxy-3-methylpentanoate (2,3-dihydroxy-3-methylvalerate) into 2-oxo-3-methylpentanoate (2-oxo-3-methylvalerate) and of (2R)-2,3-dihydroxy-3-methylbutanoate (2,3-dihydroxyisovalerate) into 2-oxo-3-methylbutanoate (2-oxoisovalerate), the penultimate precursor to L-isoleucine and L-valine, respectively. The chain is Dihydroxy-acid dehydratase from Clavibacter michiganensis subsp. michiganensis (strain NCPPB 382).